A 124-amino-acid chain; its full sequence is Ribosome-binding factor A (124 aa).

Belongs to the RbfA family. As to quaternary structure, monomer. Binds 30S ribosomal subunits, but not 50S ribosomal subunits or 70S ribosomes.

It localises to the cytoplasm. One of several proteins that assist in the late maturation steps of the functional core of the 30S ribosomal subunit. Associates with free 30S ribosomal subunits (but not with 30S subunits that are part of 70S ribosomes or polysomes). Required for efficient processing of 16S rRNA. May interact with the 5'-terminal helix region of 16S rRNA. The polypeptide is Ribosome-binding factor A (Sorangium cellulosum (strain So ce56) (Polyangium cellulosum (strain So ce56))).